The sequence spans 368 residues: Repressor ROX1 (368 aa).

Residues 10-83 (IPRPKNAFIL…EHERKYPEYK (74 aa)) constitute a DNA-binding region (HMG box). Disordered regions lie at residues 100–121 (IEQQQQQQQKEQQQQKQSQPQL) and 242–273 (SSQTPVTTTTTSTTTATSSPGKFSSSPNSSVL). Low complexity predominate over residues 102–121 (QQQQQQQKEQQQQKQSQPQL).

It localises to the nucleus. In terms of biological role, transcription factor that represses the expression of HEM13, COX5B, ANB1, CYC7 or AAC3 (hypoxic function). Binds to the DNA sequence 5'-RRRTAACAAGAG-3'. The sequence is that of Repressor ROX1 (ROX1) from Saccharomyces cerevisiae (strain ATCC 204508 / S288c) (Baker's yeast).